A 502-amino-acid chain; its full sequence is Solute carrier family 2, facilitated glucose transporter member 5 (502 aa).

Position 1 is an N-acetylmethionine (Met1). The Cytoplasmic segment spans residues 1 to 17 (MEKEDQEKTGKLTLVLA). The chain crosses the membrane as a helical span at residues 18–38 (LATFLAAFGSSFQYGYNVAAV). D-fructose is bound at residue Tyr31. At 39-67 (NSPSEFMQQFYNDTYYDRNKENIESFTLT) the chain is on the extracellular side. An N-linked (GlcNAc...) asparagine glycan is attached at Asn50. Residues 68-90 (LLWSLTVSMFPFGGFIGSLMVGF) form a helical membrane-spanning segment. Residues 91-97 (LVNNLGR) lie on the Cytoplasmic side of the membrane. A helical membrane pass occupies residues 98–118 (KGALLFNNIFSILPAILMGCS). Topologically, residues 119–125 (KIAKSFE) are extracellular. A helical transmembrane segment spans residues 126–148 (IIIASRLLVGICAGISSNVVPMY). Residues 149–160 (LGELAPKNLRGA) lie on the Cytoplasmic side of the membrane. The helical transmembrane segment at 161–181 (LGVVPQLFITVGILVAQLFGL) threads the bilayer. A D-fructose-binding site is contributed by Gln166. Over 182–191 (RSVLASEEGW) the chain is Extracellular. The chain crosses the membrane as a helical span at residues 192 to 212 (PILLGLTGVPAGLQLLLLPFF). Topologically, residues 213 to 276 (PESPRYLLIQ…LFRMQSLRWQ (64 aa)) are cytoplasmic. A helical transmembrane segment spans residues 277-297 (LISTIVLMAGQQLSGVNAIYY). Residues Gln287 and 295–297 (IYY) each bind D-fructose. Residues 298-312 (YADQIYLSAGVKSND) are Extracellular-facing. A helical membrane pass occupies residues 313-333 (VQYVTAGTGAVNVFMTMVTVF). The Cytoplasmic segment spans residues 334 to 341 (VVELWGRR). A helical transmembrane segment spans residues 342–362 (NLLLIGFSTCLTACIVLTVAL). Residues 363–370 (ALQNTISW) lie on the Extracellular side of the membrane. The helical transmembrane segment at 371-393 (MPYVSIVCVIVYVIGHAVGPSPI) threads the bilayer. His386 is a binding site for D-fructose. Over 394–411 (PALFITEIFLQSSRPSAY) the chain is Cytoplasmic. Residues 412-432 (MIGGSVHWLSNFIVGLIFPFI) traverse the membrane as a helical segment. 418 to 419 (HW) contacts D-fructose. Topologically, residues 433–438 (QVGLGP) are extracellular. A helical membrane pass occupies residues 439 to 459 (YSFIIFAIICLLTTIYIFMVV). Residues 460 to 502 (PETKGRTFVEINQIFAKKNKVSDVYPEKEEKELNDLPPATREQ) lie on the Cytoplasmic side of the membrane.

Belongs to the major facilitator superfamily. Sugar transporter (TC 2.A.1.1) family. Glucose transporter subfamily. Detected in jejunum. Detected in kidney, skeletal muscle, brain and adipose tissue (at protein level). Detected in small intestine and in kidney, and at much lower levels in brain. Detected in enterocytes in duodenum, jejunum, and ileum.

The protein resides in the apical cell membrane. It is found in the cell membrane. Its subcellular location is the sarcolemma. It carries out the reaction D-fructose(out) = D-fructose(in). With respect to regulation, fructose uptake is inhibited by mercury ions. Fructose uptake is only slightly inhibited by cytochalasin B. Its function is as follows. Functions as a fructose transporter that has only low activity with other monosaccharides. Can mediate the uptake of deoxyglucose, but with low efficiency. Essential for fructose uptake in the small intestine. Plays a role in the regulation of salt uptake and blood pressure in response to dietary fructose. Required for the development of high blood pressure in response to high dietary fructose intake. This Rattus norvegicus (Rat) protein is Solute carrier family 2, facilitated glucose transporter member 5.